The primary structure comprises 623 residues: Arginine decarboxylase 2 (623 aa).

Residue K109 is modified to N6-(pyridoxal phosphate)lysine. 295–305 (LDCGGGLGVDY) contacts substrate.

Belongs to the Orn/Lys/Arg decarboxylase class-II family. SpeA subfamily. Pyridoxal 5'-phosphate is required as a cofactor. Mg(2+) serves as cofactor. As to expression, expressed in stems (at protein level).

The enzyme catalyses L-arginine + H(+) = agmatine + CO2. The protein operates within amine and polyamine biosynthesis; agmatine biosynthesis; agmatine from L-arginine: step 1/1. In Oryza sativa subsp. japonica (Rice), this protein is Arginine decarboxylase 2 (ADC2).